Reading from the N-terminus, the 634-residue chain is Probable potassium transport system protein Kup 1 (634 aa).

12 helical membrane passes run 20-40 (FLTL…TSPL), 64-84 (VMSL…VLLI), 110-130 (FAAI…DAII), 148-168 (PVFD…LFVV), 176-196 (VAAW…LGGI), 224-244 (AGLL…ALYA), 256-276 (FAWF…QGAM), 290-310 (FLFP…ATII), 348-368 (IYIP…VFAF), 377-397 (AYGI…YFVM), 405-425 (VATS…FLMA), and 430-450 (IFEG…VMIT).

This sequence belongs to the HAK/KUP transporter (TC 2.A.72) family.

It localises to the cell inner membrane. It catalyses the reaction K(+)(in) + H(+)(in) = K(+)(out) + H(+)(out). Functionally, transport of potassium into the cell. Likely operates as a K(+):H(+) symporter. The sequence is that of Probable potassium transport system protein Kup 1 from Rhodopseudomonas palustris (strain BisB5).